Reading from the N-terminus, the 632-residue chain is MAU2 chromatid cohesion factor homolog (632 aa).

TPR repeat units follow at residues 453-486 and 493-526; these read GGFY…ANAE and SCSL…ASKI.

It belongs to the SCC4/mau-2 family. Interacts with Nipped-B to form the cohesin loading complex.

It localises to the nucleus. The protein localises to the nucleoplasm. In terms of biological role, required for association of the cohesin complex with chromatin during interphase. Plays a role in sister chromatid cohesion and normal progression through prometaphase. The chain is MAU2 chromatid cohesion factor homolog from Drosophila erecta (Fruit fly).